We begin with the raw amino-acid sequence, 296 residues long: Thioredoxin-related transmembrane protein 2 (296 aa).

Residues 1 to 48 form the signal peptide; sequence MAVLAPLIALVYSVPRLSRWLAQPYYLLSALLSAAFLLVRKLPPLCHG. Residues 49–102 are Extracellular-facing; that stretch reads LPTQREDGNPCDFDWREVEILMFLSAIVMMKNRRSITVEQHIGNIFMFSKVANA. The chain crosses the membrane as a helical span at residues 103–125; it reads ILFFRLDIRMGLLYITLCIVFLM. The Thioredoxin domain maps to 114 to 269; that stretch reads LLYITLCIVF…LYQRAKKLSK (156 aa). Topologically, residues 126-296 are cytoplasmic; the sequence is TCKPPLYMGP…VSDGESKKDK (171 aa). Residues Ser211, Ser243, and Ser288 each carry the phosphoserine modification. The interval 269 to 296 is disordered; that stretch reads KAGDNIPEEQPVAPTPTRVSDGESKKDK. The short motif at 293–296 is the Di-lysine motif element; that stretch reads KKDK.

As to quaternary structure, monomer. Homodimer; disulfide-linked. Occurs in both reduced and oxidized monomeric form. Oxidative conditions increase homodimerization. Interacts with CANX. Interacts with ATP2A2.

It localises to the endoplasmic reticulum membrane. Its subcellular location is the mitochondrion membrane. Functionally, endoplasmic reticulum and mitochondria-associated protein that probably functions as a regulator of cellular redox state and thereby regulates protein post-translational modification, protein folding and mitochondrial activity. Indirectly regulates neuronal proliferation, migration, and organization in the developing brain. The sequence is that of Thioredoxin-related transmembrane protein 2 (TMX2) from Macaca fascicularis (Crab-eating macaque).